Consider the following 159-residue polypeptide: V-type proton ATPase 16 kDa proteolipid subunit c (159 aa).

The Lumenal portion of the chain corresponds to 1 to 11 (MSEEGSPMYSP). Residues 12 to 32 (FFGVMGAASAMVFSALGAAYG) traverse the membrane as a helical segment. At 33-54 (TAKSGVGISAMSVMRPELIMKC) the chain is on the cytoplasmic side. Residues 55–75 (IIPVVMAGIIAIYGLVVAVLI) traverse the membrane as a helical segment. Residues 76 to 93 (AGKLDEAPTYTLYQGFVH) lie on the Lumenal side of the membrane. A helical transmembrane segment spans residues 94–114 (MGAGLSVGLSGLAAGFAIGIV). Residues 115 to 132 (GDAGVRGTAQQPRLYVGM) are Cytoplasmic-facing. The helical transmembrane segment at 133-153 (ILILIFAEVLGLYGLIVAIFL) threads the bilayer. Residues 154–159 (YTKTSS) lie on the Lumenal side of the membrane.

The protein belongs to the V-ATPase proteolipid subunit family. In terms of assembly, V-ATPase is a heteromultimeric enzyme made up of two complexes: the ATP-hydrolytic V1 complex and the proton translocation V0 complex. The V1 complex consists of three catalytic AB heterodimers that form a heterohexamer, three peripheral stalks each consisting of EG heterodimers, one central rotor including subunits D and F, and the regulatory subunits C and H. The proton translocation complex V0 consists of the proton transport subunit a, a ring of proteolipid subunits c9c'', rotary subunit d, subunits e and f, and two accessory subunits.

It is found in the vacuole membrane. In terms of biological role, proton-conducting pore forming subunit of the V0 complex of vacuolar(H+)-ATPase (V-ATPase), a multisubunit enzyme composed of a peripheral complex (V1) that hydrolyzes ATP and a membrane integral complex (V0) that translocates protons. V-ATPase is responsible for acidifying and maintaining the pH of intracellular compartments and in some cell types, is targeted to the plasma membrane, where it is responsible for acidifying the extracellular environment. This is V-type proton ATPase 16 kDa proteolipid subunit c from Nephrops norvegicus (Norway lobster).